The following is a 309-amino-acid chain: Taste receptor type 2 member 113 (309 aa).

At 1 to 10 (MVAVLQSTLP) the chain is on the extracellular side. The chain crosses the membrane as a helical span at residues 11-31 (IIFSMEFIMGTLGNGFIFLIV). Residues 32 to 55 (CIDWVQRRKISLVDQIRTALAISR) are Cytoplasmic-facing. A helical membrane pass occupies residues 56–76 (IALIWLIFLDWWVSVHYPALH). The Extracellular portion of the chain corresponds to 77-80 (ETGK). A helical membrane pass occupies residues 81–101 (MLSTYLISWTVINHCNFWLTA). Residues 102 to 127 (NLSILYFLKIANFSNIIFLYLKFRSK) lie on the Cytoplasmic side of the membrane. Residues 128 to 148 (NVVLVTLLVSLFFLFLNTVII) form a helical membrane-spanning segment. Topologically, residues 149–185 (KIFSDVCFDSVQRNVSQIFIMYNHEQICKFLSFTNPM) are extracellular. N162 carries N-linked (GlcNAc...) asparagine glycosylation. Residues 186 to 206 (FTFIPFVMSTVMFSLLIFSLW) form a helical membrane-spanning segment. Over 207–229 (RHLKNMQHTAKGCRDISTTVHIR) the chain is Cytoplasmic. A helical membrane pass occupies residues 230–250 (ALQTIIVSVVLYTIFFLSFFV). At 251–262 (KVWSFVSPERYL) the chain is on the extracellular side. The helical transmembrane segment at 263-283 (IFLFVWALGNAVFSAHPFVMI) threads the bilayer. Residues 284–309 (LVNRRLRLASLSLIFWLWYRFKNIEV) lie on the Cytoplasmic side of the membrane.

It belongs to the G-protein coupled receptor T2R family.

Its subcellular location is the membrane. In terms of biological role, putative taste receptor which may play a role in the perception of bitterness. The sequence is that of Taste receptor type 2 member 113 from Mus musculus (Mouse).